A 300-amino-acid polypeptide reads, in one-letter code: Probable alpha-L-glutamate ligase (300 aa).

Residues 104-287 (LQLLARQGID…IAGRMIEYIE (184 aa)) enclose the ATP-grasp domain. ATP is bound by residues lysine 141, 178–179 (EY), aspartate 187, and 211–213 (RSN). Positions 248, 260, and 262 each coordinate Mg(2+). The Mn(2+) site is built by aspartate 248, glutamate 260, and asparagine 262.

Belongs to the RimK family. Mg(2+) serves as cofactor. It depends on Mn(2+) as a cofactor.

The polypeptide is Probable alpha-L-glutamate ligase (Serratia proteamaculans (strain 568)).